Reading from the N-terminus, the 485-residue chain is Probable serine/threonine-protein kinase nek1 (485 aa).

The Protein kinase domain maps to 12-283; sequence YLIKSQIGSG…TQQILEQVFI (272 aa). ATP is bound by residues 18-26 and lysine 41; that span reads IGSGSYGNT. Residue aspartate 136 is the Proton acceptor of the active site. A compositionally biased stretch (polar residues) spans 354–365; the sequence is KNQQQQSPQKLE. The segment at 354-419 is disordered; it reads KNQQQQSPQK…NNDKNNNINN (66 aa). Residues 366–419 show a composition bias toward low complexity; it reads NNNNNNNDNNNNNNNNNNNNNNNNNNNNNNNNNNNNNNNNNNNNNNDKNNNINN.

This sequence belongs to the protein kinase superfamily. NEK Ser/Thr protein kinase family. NIMA subfamily.

The enzyme catalyses L-seryl-[protein] + ATP = O-phospho-L-seryl-[protein] + ADP + H(+). The catalysed reaction is L-threonyl-[protein] + ATP = O-phospho-L-threonyl-[protein] + ADP + H(+). This chain is Probable serine/threonine-protein kinase nek1 (nek1), found in Dictyostelium discoideum (Social amoeba).